Here is a 385-residue protein sequence, read N- to C-terminus: 1-deoxy-D-xylulose 5-phosphate reductoisomerase (385 aa).

T10, G11, S12, I13, and N124 together coordinate NADPH. Residue K125 coordinates 1-deoxy-D-xylulose 5-phosphate. An NADPH-binding site is contributed by E126. Position 150 (D150) interacts with Mn(2+). Positions 151, 152, 176, and 199 each coordinate 1-deoxy-D-xylulose 5-phosphate. Residue E152 participates in Mn(2+) binding. G205 contacts NADPH. 1-deoxy-D-xylulose 5-phosphate is bound by residues S212, N217, K218, and E221. Position 221 (E221) interacts with Mn(2+).

Belongs to the DXR family. Mg(2+) serves as cofactor. The cofactor is Mn(2+).

The enzyme catalyses 2-C-methyl-D-erythritol 4-phosphate + NADP(+) = 1-deoxy-D-xylulose 5-phosphate + NADPH + H(+). The protein operates within isoprenoid biosynthesis; isopentenyl diphosphate biosynthesis via DXP pathway; isopentenyl diphosphate from 1-deoxy-D-xylulose 5-phosphate: step 1/6. Catalyzes the NADPH-dependent rearrangement and reduction of 1-deoxy-D-xylulose-5-phosphate (DXP) to 2-C-methyl-D-erythritol 4-phosphate (MEP). The protein is 1-deoxy-D-xylulose 5-phosphate reductoisomerase of Clostridium kluyveri (strain NBRC 12016).